The following is a 273-amino-acid chain: S-adenosylmethionine decarboxylase proenzyme (273 aa).

The active-site Schiff-base intermediate with substrate; via pyruvic acid is the Ser118. Pyruvic acid (Ser); by autocatalysis is present on Ser118. The Proton acceptor; for processing activity role is filled by His123. The active-site Proton donor; for catalytic activity is the Cys146.

The protein belongs to the prokaryotic AdoMetDC family. Type 2 subfamily. Heterooctamer of four alpha and four beta chains arranged as a tetramer of alpha/beta heterodimers. It depends on pyruvate as a cofactor. Post-translationally, is synthesized initially as an inactive proenzyme. Formation of the active enzyme involves a self-maturation process in which the active site pyruvoyl group is generated from an internal serine residue via an autocatalytic post-translational modification. Two non-identical subunits are generated from the proenzyme in this reaction, and the pyruvate is formed at the N-terminus of the alpha chain, which is derived from the carboxyl end of the proenzyme. The post-translation cleavage follows an unusual pathway, termed non-hydrolytic serinolysis, in which the side chain hydroxyl group of the serine supplies its oxygen atom to form the C-terminus of the beta chain, while the remainder of the serine residue undergoes an oxidative deamination to produce ammonia and the pyruvoyl group blocking the N-terminus of the alpha chain.

It catalyses the reaction S-adenosyl-L-methionine + H(+) = S-adenosyl 3-(methylsulfanyl)propylamine + CO2. It functions in the pathway amine and polyamine biosynthesis; S-adenosylmethioninamine biosynthesis; S-adenosylmethioninamine from S-adenosyl-L-methionine: step 1/1. In terms of biological role, catalyzes the decarboxylation of S-adenosylmethionine to S-adenosylmethioninamine (dcAdoMet), the propylamine donor required for the synthesis of the polyamines spermine and spermidine from the diamine putrescine. The polypeptide is S-adenosylmethionine decarboxylase proenzyme (Alkalilimnicola ehrlichii (strain ATCC BAA-1101 / DSM 17681 / MLHE-1)).